Consider the following 310-residue polypeptide: Acetylglutamate kinase (310 aa).

Substrate-binding positions include 79 to 80 (GG), arginine 101, and asparagine 206.

It belongs to the acetylglutamate kinase family. ArgB subfamily.

Its subcellular location is the cytoplasm. It catalyses the reaction N-acetyl-L-glutamate + ATP = N-acetyl-L-glutamyl 5-phosphate + ADP. Its pathway is amino-acid biosynthesis; L-arginine biosynthesis; N(2)-acetyl-L-ornithine from L-glutamate: step 2/4. Its function is as follows. Catalyzes the ATP-dependent phosphorylation of N-acetyl-L-glutamate. In Rhodospirillum rubrum (strain ATCC 11170 / ATH 1.1.1 / DSM 467 / LMG 4362 / NCIMB 8255 / S1), this protein is Acetylglutamate kinase.